Consider the following 57-residue polypeptide: Large ribosomal subunit protein bL33 (57 aa).

It belongs to the bacterial ribosomal protein bL33 family.

The polypeptide is Large ribosomal subunit protein bL33 (Shewanella amazonensis (strain ATCC BAA-1098 / SB2B)).